A 74-amino-acid chain; its full sequence is UPF0154 protein LSL_0542 (74 aa).

Residues isoleucine 5–alanine 25 traverse the membrane as a helical segment.

The protein belongs to the UPF0154 family.

The protein resides in the cell membrane. This Ligilactobacillus salivarius (strain UCC118) (Lactobacillus salivarius) protein is UPF0154 protein LSL_0542.